The following is a 198-amino-acid chain: TATA-box-binding protein (198 aa).

2 repeat units span residues 14–90 (IENI…IKTL) and 105–181 (IQNI…FDKL).

The protein belongs to the TBP family.

Its function is as follows. General factor that plays a role in the activation of archaeal genes transcribed by RNA polymerase. Binds specifically to the TATA box promoter element which lies close to the position of transcription initiation. This is TATA-box-binding protein (tbp) from Saccharolobus solfataricus (strain ATCC 35092 / DSM 1617 / JCM 11322 / P2) (Sulfolobus solfataricus).